A 563-amino-acid polypeptide reads, in one-letter code: Solute carrier family 22 member 1 (563 aa).

Over 1-21 (MLTVDDVLEQVGEFGWFQKQT) the chain is Cytoplasmic. Residues 22 to 42 (FLILCLLSAAFAPIYVGIVFL) form a helical membrane-spanning segment. The Extracellular segment spans residues 43 to 144 (AFTPDHRCRS…LVCDDSWKVD (102 aa)). A glycan (N-linked (GlcNAc...) asparagine) is linked at N71. Residues 145 to 165 (LFQSCVNLGFFLGSLGVGYIA) form a helical membrane-spanning segment. Residues 166–171 (DRFGRK) lie on the Cytoplasmic side of the membrane. Residues 172–192 (VCLLATTLTCASLGVLTAVAP) traverse the membrane as a helical segment. The Extracellular portion of the chain corresponds to 193 to 196 (DYTS). A helical transmembrane segment spans residues 197–219 (LLIFRLLQGLVSKGSWTAGYTLI). At 220-232 (TEFVGLGYRRTVA) the chain is on the cytoplasmic side. The helical transmembrane segment at 233–253 (ILYQMAFTVGLVLLSGLAYIL) threads the bilayer. The Extracellular segment spans residues 254–257 (PHWR). The chain crosses the membrane as a helical span at residues 258–278 (WLQLAVSLPIFLLLFRFWFVP). The Proline-rich sequence signature appears at 278-282 (PESPR). At 279 to 342 (ESPRWLLSQK…FRTPNLRKYT (64 aa)) the chain is on the cytoplasmic side. S328 is modified (phosphoserine). Residues 343–363 (FILMYLWFTSSVVYQGLIMHV) traverse the membrane as a helical segment. The Extracellular segment spans residues 364 to 371 (GATGGNLY). Residues 372–392 (LDFLYSALVEFPAGFIILVTI) form a helical membrane-spanning segment. The Cytoplasmic portion of the chain corresponds to 393–398 (DRFGRR). Residues 399-418 (YPLATSNLAAGLACFLMIFI) traverse the membrane as a helical segment. The Extracellular portion of the chain corresponds to 419 to 423 (PHDLP). The helical transmembrane segment at 424–446 (WLNIMVACVGRMGITIVFQMVCL) threads the bilayer. Topologically, residues 447–459 (VNAELFPTFIRNL) are cytoplasmic. A helical transmembrane segment spans residues 460 to 480 (GMMVCSSLCDLGGVLTPFLVF). Residues 481–487 (RLMEVWQ) lie on the Extracellular side of the membrane. The chain crosses the membrane as a helical span at residues 488–508 (GSPLILFAALGLVAGGMTLLL). Residues 509 to 563 (PETKGVTLPETIEDAENLQRKAKPKENKIYLQVQTSELNTQAAERDASQGTAQQK) are Cytoplasmic-facing.

Belongs to the major facilitator (TC 2.A.1) superfamily. Organic cation transporter (TC 2.A.1.19) family. Post-translationally, phosphorylated.

The protein resides in the basolateral cell membrane. It is found in the apical cell membrane. The protein localises to the lateral cell membrane. It localises to the basal cell membrane. Its subcellular location is the cell membrane. It catalyses the reaction 1-methylnicotinamide(out) = 1-methylnicotinamide(in). The catalysed reaction is dopamine(out) = dopamine(in). It carries out the reaction serotonin(out) = serotonin(in). The enzyme catalyses (R)-adrenaline(out) = (R)-adrenaline(in). It catalyses the reaction (R)-noradrenaline(out) = (R)-noradrenaline(in). The catalysed reaction is histamine(out) = histamine(in). It carries out the reaction guanidine(out) = guanidine(in). The enzyme catalyses choline(out) = choline(in). It catalyses the reaction acetylcholine(in) = acetylcholine(out). The catalysed reaction is thiamine(in) = thiamine(out). It carries out the reaction spermidine(in) = spermidine(out). The enzyme catalyses agmatine(out) = agmatine(in). It catalyses the reaction putrescine(out) = putrescine(in). The catalysed reaction is (R)-carnitine(in) = (R)-carnitine(out). It carries out the reaction O-isobutanoyl-(R)-carnitine(in) = O-isobutanoyl-(R)-carnitine(out). The enzyme catalyses O-acetyl-(R)-carnitine(in) = O-acetyl-(R)-carnitine(out). It catalyses the reaction O-3-hydroxybutanoyl-(R)-carnitine(in) = O-3-hydroxybutanoyl-(R)-carnitine(out). The catalysed reaction is O-propanoyl-(R)-carnitine(in) = O-propanoyl-(R)-carnitine(out). It carries out the reaction O-butanoyl-(R)-carnitine(in) = O-butanoyl-(R)-carnitine(out). The enzyme catalyses O-2-methylbutanoyl-(R)-carnitine(in) = O-2-methylbutanoyl-(R)-carnitine(out). It catalyses the reaction O-3-methylbutanoyl-(R)-carnitine(in) = O-3-methylbutanoyl-(R)-carnitine(out). The catalysed reaction is O-hexanoyl-(R)-carnitine(in) = O-hexanoyl-(R)-carnitine(out). It carries out the reaction L-histidyl-L-proline diketopiperazine(in) = L-histidyl-L-proline diketopiperazine(out). The enzyme catalyses (R)-salsolinol(in) = (R)-salsolinol(out). It catalyses the reaction prostaglandin F2alpha(out) = prostaglandin F2alpha(in). The catalysed reaction is prostaglandin E2(out) = prostaglandin E2(in). Its activity is regulated as follows. Phosphorylation of the transporter leads to changes in its substrate affinity, resulting in a regulation of the transport activity. In contrast with rat ortholog, ASP uptake is inhibited by protein kinase A (PKA) and C (PKC) activation. ASP uptake is also endogenously activated by calmodulin, the calmodulin-dependent kinase II and LCK tyrosine kinase. Inhibited by cGMP, most likely through a cGMP-binding protein that interacts with OCT1. Its function is as follows. Electrogenic voltage-dependent transporter that mediates the transport of a variety of organic cations such as endogenous bioactive amines, cationic drugs and xenobiotics. Functions as a pH- and Na(+)-independent, bidirectional transporter. Cation cellular uptake or release is driven by the electrochemical potential (i.e. membrane potential and concentration gradient) and substrate selectivity. Hydrophobicity is a major requirement for recognition in polyvalent substrates and inhibitors. Primarily expressed in the basolateral membrane of hepatocytes and proximal tubules and involved in the uptake and disposition of cationic compounds from the blood by hepatic and renal clearance. Most likely functions as an uptake carrier in enterocytes contributing to the intestinal elimination of organic cations from the systemic circulation. Transports endogenous monoamines such as N-1-methylnicotinamide (NMN), guanidine, neurotransmitters dopamine, serotonin, noradrenaline, adrenaline and histamine, and quaternary ammonium compound such as choline. Also transports natural polyamines such as spermidine, agmatine and putrescine at low affinity, but relatively high turnover. Involved in the hepatic and intestinal uptake of the vitamin B1/thiamine, hence regulating hepatic lipid and energy metabolism. Contributes to the influx and efflux of fatty acid carriers carnitines and acylcarnitines across the basolateral membrane of hepatocytes, from the liver to the systemic circulation and inversely and may be involved in regulating the systemic availability of hepatic acylcarnitines. Also capable of transporting non-amine endogenous compounds such as prostaglandin E2 (PGE2) and prostaglandin F2-alpha (PGF2-alpha). May contribute to the transport of cationic compounds in testes across the blood-testis-barrier. Also mediates the uptake of xenobiotics tributylmethylammonium (TBuMA), quinidine, N-methyl-quinine (NMQ), N-methyl-quinidine (NMQD) N-(4,4-azo-n-pentyl)-quinuclidine (APQ), azidoprocainamide methoiodide (AMP), N-(4,4-azo-n-pentyl)-21-deoxyajmalinium (APDA) and 4-(4-(dimethylamino)styryl)-N-methylpyridinium (ASP). The protein is Solute carrier family 22 member 1 (SLC22A1) of Bos taurus (Bovine).